The chain runs to 599 residues: Adenine deaminase (599 aa).

The tract at residues 1–31 (MARSNRRGGRGDPEDDPAWAPPGHRCAGERA) is disordered.

It belongs to the metallo-dependent hydrolases superfamily. Adenine deaminase family. Mn(2+) serves as cofactor.

The enzyme catalyses adenine + H2O + H(+) = hypoxanthine + NH4(+). This Methanopyrus kandleri (strain AV19 / DSM 6324 / JCM 9639 / NBRC 100938) protein is Adenine deaminase.